We begin with the raw amino-acid sequence, 367 residues long: Isoflavone 4'-O-methyltransferase (367 aa).

S-adenosyl-L-methionine is bound by residues 209-212 (VGGG), aspartate 233, 233-234 (DQ), 253-254 (DM), and lysine 267. The active-site Proton acceptor is the histidine 271.

The protein belongs to the class I-like SAM-binding methyltransferase superfamily. Cation-independent O-methyltransferase family. COMT subfamily.

It catalyses the reaction a 4'-hydroxyisoflavone + S-adenosyl-L-methionine = a 4'-methoxyisoflavone + S-adenosyl-L-homocysteine + H(+). The catalysed reaction is (2R,3S)-2,4',7-trihydroxyisoflavanone + S-adenosyl-L-methionine = (2R,3S)-2,7-dihydroxy-4'-methoxyisoflavanone + S-adenosyl-L-homocysteine + H(+). Its function is as follows. 2-hydroxyisoflavanone 4'-O-methyltransferase involved in the biosynthesis of formononetin. Can use 2,7,4'-trihydroxyisoflavanone, (+)-6a-hydroxymaackiain or medicarpin as substrate, but not daidzein or (-)-6a-hydroxymaackiain. This chain is Isoflavone 4'-O-methyltransferase (HI4'OMT), found in Glycyrrhiza echinata (Licorice).